Here is a 143-residue protein sequence, read N- to C-terminus: MAKKVAGQLKLQVKAGSANPSPPIGPALGQRGINIMEFCKAFNAATQEMEKGMPIPVVITYYQDKSFTFAMKQPPVSYWLKKEAKITSGSKTPGKGAKAGSLTKAQIKSIAEAKMKDLNAADIEGAMAMIEGSARAMGLEVVG.

This sequence belongs to the universal ribosomal protein uL11 family. In terms of assembly, part of the ribosomal stalk of the 50S ribosomal subunit. Interacts with L10 and the large rRNA to form the base of the stalk. L10 forms an elongated spine to which L12 dimers bind in a sequential fashion forming a multimeric L10(L12)X complex. Post-translationally, one or more lysine residues are methylated.

In terms of biological role, forms part of the ribosomal stalk which helps the ribosome interact with GTP-bound translation factors. This chain is Large ribosomal subunit protein uL11, found in Rhizobium johnstonii (strain DSM 114642 / LMG 32736 / 3841) (Rhizobium leguminosarum bv. viciae).